Here is a 320-residue protein sequence, read N- to C-terminus: Mitochondrial fission regulator 1-like-B (320 aa).

Residues 1 to 37 are disordered; sequence MASLGAAAEPERSLFGKDGAEACESPEGRRSGRRKRT. Positions 9–30 are enriched in basic and acidic residues; it reads EPERSLFGKDGAEACESPEGRR.

It belongs to the MTFR1 family.

The protein localises to the mitochondrion outer membrane. Its function is as follows. Mitochondrial protein required for adaptation of miochondrial dynamics to metabolic changes. Regulates mitochondrial morphology at steady state and mediates AMPK-dependent stress-induced mitochondrial fragmentation via the control of OPA1 levels. This is Mitochondrial fission regulator 1-like-B (mtfr1l-b) from Xenopus laevis (African clawed frog).